Reading from the N-terminus, the 340-residue chain is ATP-dependent 6-phosphofructokinase (340 aa).

An ATP-binding site is contributed by G11. 21–25 contacts ADP; that stretch reads RAVVR. Residues 72-73 and 102-105 contribute to the ATP site; these read RY and GDGS. D103 is a Mg(2+) binding site. A substrate-binding site is contributed by 125 to 127; that stretch reads TID. D127 serves as the catalytic Proton acceptor. Position 154 (R154) interacts with ADP. Substrate-binding positions include R162 and 169 to 171; that span reads MGR. ADP-binding positions include 185–187, K211, and 213–215; these read GAD and KNH. Substrate is bound by residues E222, R244, and 250–253; that span reads HIQR.

It belongs to the phosphofructokinase type A (PFKA) family. ATP-dependent PFK group I subfamily. Prokaryotic clade 'B1' sub-subfamily. In terms of assembly, homotetramer. It depends on Mg(2+) as a cofactor.

The protein localises to the cytoplasm. The enzyme catalyses beta-D-fructose 6-phosphate + ATP = beta-D-fructose 1,6-bisphosphate + ADP + H(+). It functions in the pathway carbohydrate degradation; glycolysis; D-glyceraldehyde 3-phosphate and glycerone phosphate from D-glucose: step 3/4. Its activity is regulated as follows. Allosterically activated by ADP and other diphosphonucleosides, and allosterically inhibited by phosphoenolpyruvate. Its function is as follows. Catalyzes the phosphorylation of D-fructose 6-phosphate to fructose 1,6-bisphosphate by ATP, the first committing step of glycolysis. This Lactococcus lactis subsp. lactis (Streptococcus lactis) protein is ATP-dependent 6-phosphofructokinase.